Consider the following 950-residue polypeptide: MORC family CW-type zinc finger protein 1 (950 aa).

Residues K281–Q342 adopt a coiled-coil conformation. The CW-type zinc finger occupies S465–S530. The Zn(2+) site is built by C485, C488, C511, and C522. 2 disordered regions span residues P532–Q551 and K679–R700. Positions P541–L550 are enriched in basic and acidic residues. A coiled-coil region spans residues L885–G916.

Expressed at very low level in male germ cells.

The protein resides in the nucleus. In terms of biological role, required for spermatogenesis. Essential for de novo DNA methylation and silencing of transposable elements in the male embryonic germ cells. Not required for piRNA biosynthesis. This Mus musculus (Mouse) protein is MORC family CW-type zinc finger protein 1.